A 1580-amino-acid chain; its full sequence is Ras GTPase-activating protein raskol (1580 aa).

S164 bears the Phosphoserine mark. Position 167 is a phosphothreonine (T167). The segment at 197-223 (LKRTKSVTKLERTKRGSGGLRGSRSHE) is disordered. 2 positions are modified to phosphoserine: S221 and S224. The PH domain maps to 233-291 (STIDLSCTGAVGVAPVHQSVLGRRHCFQVRGGPRGERYYSCGSRQERDLWIYSLRKSIA). A C2 domain is found at 282–400 (WIYSLRKSIA…TSRLPCEQWY (119 aa)). One can recognise a Ras-GAP domain in the interval 490-700 (GLAGAFLTDV…ARMQQFLEII (211 aa)). Disordered regions lie at residues 764–819 (GMGT…QPQH), 857–892 (LLQQ…HQHP), 904–1023 (AGNQ…SYDD), 1112–1218 (ANHH…QQFG), 1284–1313 (LSGG…YGRL), 1334–1443 (VGYG…LGKS), and 1561–1580 (YETQ…QKPQ). Positions 776 to 805 (ATSSTHSIASENQENRNPGSSGSHAGSNSE) are enriched in polar residues. Low complexity-rich tracts occupy residues 806 to 818 (QLLP…AQPQ), 857 to 885 (LLQQ…GHQQ), and 926 to 939 (SSSL…LLHG). Positions 940-954 (HQQHAHHPQQLHPHH) are enriched in basic residues. Residues 987-1020 (TSTPSSTRSRTLPRNGNPNANGNVGSSNNNQSGS) show a composition bias toward low complexity. The segment covering 1140–1150 (SAKSSHCSSGY) has biased composition (polar residues). Residues 1151 to 1169 (QSISTNPSPSQSSSPVESQ) show a composition bias toward low complexity. Phosphoserine occurs at positions 1158 and 1164. Over residues 1186–1206 (PSYQLQPQTGSSRSSAQSNTH) the composition is skewed to polar residues. 3 stretches are compositionally biased toward low complexity: residues 1207-1216 (QQQQQQQQQQ), 1285-1299 (SGGS…ASTS), and 1351-1362 (HQQQQNPMQQQQ). The span at 1363–1372 (QRERDQEHKQ) shows a compositional bias: basic and acidic residues. The span at 1374–1388 (AGSVAGSVGSATSAA) shows a compositional bias: low complexity. Over residues 1396–1415 (SARTLSDSSTDTEGHCNQLQ) the composition is skewed to polar residues. S1401 and S1403 each carry phosphoserine. The segment covering 1427 to 1438 (GGSGGGGAGSEQ) has biased composition (gly residues). Low complexity predominate over residues 1563 to 1580 (TQQQQQQHQAPPKTQKPQ).

It is found in the cytoplasm. The protein localises to the cell membrane. It localises to the apical cell membrane. Its function is as follows. GTPase-activating protein, which acts as a negative regulator for some members of the Ras family. Probably decreases their signaling activity by stimulating their intrinsic GTPase activity, thereby lowering the levels of the GTP-bound active form. Functions with DE-cadherin (shg) to promote embryonic border cell (BC) migration and adhesion by regulating the distribution of actin protrusions in BCs. Promotes shg-mediated adhesion at the BC interfaces and likely maintains BC cluster adhesion during BC detachment from the follicular epithelium and subsequent BC migration. Also required for restricting the development of actin-rich protrusions to the front of migrating BC clusters thus ensuring unidirectional BC migration. Possibly functions by suppressing Rac1 signaling in non-leading BCs, thus limiting its activity to leading BCs where it initiates localized actin cytoskeleton remodeling to produce the polarized protrusions. The polypeptide is Ras GTPase-activating protein raskol (Drosophila melanogaster (Fruit fly)).